The primary structure comprises 292 residues: UDP-3-O-acyl-N-acetylglucosamine deacetylase (292 aa).

His-76, His-232, and Asp-236 together coordinate Zn(2+). Residue His-259 is the Proton donor of the active site.

This sequence belongs to the LpxC family. Requires Zn(2+) as cofactor.

It carries out the reaction a UDP-3-O-[(3R)-3-hydroxyacyl]-N-acetyl-alpha-D-glucosamine + H2O = a UDP-3-O-[(3R)-3-hydroxyacyl]-alpha-D-glucosamine + acetate. Its pathway is glycolipid biosynthesis; lipid IV(A) biosynthesis; lipid IV(A) from (3R)-3-hydroxytetradecanoyl-[acyl-carrier-protein] and UDP-N-acetyl-alpha-D-glucosamine: step 2/6. Catalyzes the hydrolysis of UDP-3-O-myristoyl-N-acetylglucosamine to form UDP-3-O-myristoylglucosamine and acetate, the committed step in lipid A biosynthesis. The sequence is that of UDP-3-O-acyl-N-acetylglucosamine deacetylase from Thermodesulfovibrio yellowstonii (strain ATCC 51303 / DSM 11347 / YP87).